We begin with the raw amino-acid sequence, 169 residues long: Centrin-1 (169 aa).

Positions 1 to 21 are essential for homooligomerization; it reads MHSRKGASSLPRGRGAGKKTE. Positions 1 to 25 are disordered; the sequence is MHSRKGASSLPRGRGAGKKTELTEE. EF-hand domains are found at residues 25-60, 61-96, 98-133, and 134-169; these read EQRQ…LGFE, PKKE…KMAE, DPRE…LGEN, and LTDE…TNLF. Positions 38, 40, 42, 44, 49, 74, 76, 78, 80, and 85 each coordinate Ca(2+).

Belongs to the centrin family. Monomer. Homooligomerizes in a Ca(2+)-dependent manner. Interaction via the C-terminus with other proteins disrupts and/or prevents homooligomerization. Interacts with SFI1.

Its subcellular location is the cytoplasm. It is found in the cytoskeleton. It localises to the microtubule organizing center. The protein resides in the centrosome. In terms of biological role, acts as a calcium sensor. Part of the centrosome outer core complex. In Toxoplasma gondii (strain ATCC 50611 / Me49), this protein is Centrin-1.